The primary structure comprises 591 residues: Beta-fructofuranosidase, insoluble isoenzyme CWINV4 (591 aa).

The N-terminal stretch at 1 to 22 (MAISNVISVLLLLLVLINLSNQ) is a signal peptide. Residues 61-64 (WIND), Gln80, Trp88, and 123-124 (WS) contribute to the substrate site. Residue Asp64 is part of the active site. 2 N-linked (GlcNAc...) asparagine glycosylation sites follow: Asn145 and Asn182. Substrate contacts are provided by residues 187-188 (RD), Glu242, and Asp276. N-linked (GlcNAc...) asparagine glycans are attached at residues Asn336, Asn472, and Asn565. An intrachain disulfide couples Cys436 to Cys484.

It belongs to the glycosyl hydrolase 32 family. As to expression, expressed in flowers, and seeds, and, to a lower extent, in seedlings.

Its subcellular location is the secreted. The protein resides in the extracellular space. The protein localises to the apoplast. It localises to the cell wall. The enzyme catalyses Hydrolysis of terminal non-reducing beta-D-fructofuranoside residues in beta-D-fructofuranosides.. The protein is Beta-fructofuranosidase, insoluble isoenzyme CWINV4 (CWINV4) of Arabidopsis thaliana (Mouse-ear cress).